A 1074-amino-acid chain; its full sequence is MARFSSISDTLESDDSGIKVLFAVDGCAVSFSLALLTGQIPSTNSVYVIGYWDPSDRFSSIPFLDGDPNTNERISTTVCNLEDVPSPLRVEFCLLNQMASGMGGADLKLRTRAIFVCRFTSWSEMNAIANSIIYGTPIQAGVLQATISETETFMLHDEFNLALHVFLNGLSLKGRNKKDVCMSLNHNYISSVSENFPRGKRGLTGLYLQHEQKVTAAYRRIYGGSTTTAFWYVSKFGPDEKSLVLALRYYLLQAQEEVTGIATGYDLQAIKDICKTYAVSVNPNPTGFLAADLTSFSRLSRFCCLSYYSKGSVAIAFPSYVERRIMADIAEVDALREYIERDRPSLKISDLEFVKYIYLAYFECYNREQLKRHLKDVTVSLPDEDIYKKSSLGKCAVENFFTHVRSRLNVNDHIAHNVLPEQVEMGNKLVRKFGRARMYLSTTMTNESHFTGICECASVILKRLDTLEMKLQKYGWPSDRVDGSNLMADNQNNSTLIPYDKSRSSGMILECSNTHSRGGPMIVKRLLALVSADSRAGGIGPANMLMGIDSAIDGPLPVYRVGMSKGRQAFTVLMTECWERTIPSPGSAKAHLIKLNNSYGTSTEDLISRDLFLTSEIEQLIGSTVELPEITCGSADEQQYINRNEVFNGNLAIGNIVLDVDIHLRNPIPLRLMHAAIRGFRSGILRALALLLPKANIDHGSYPCYFYKSSCKKSRVMGGAPWMLHDAELAPDYSMFENAEFDLEMGIDDPLLIDQIDESLTRWSSESSRSVDLDPDKPCGCHDKIGLRVCIPVPSPYLLVGSKTLAGLSRIIQQAVLLERNFVETIGPYLKNYEIIDSGVYGHGRSLRLPFFGKIDENGIVSRRLVPFFVIPDDCADMEKFIVAHFEPKNFHFHSSIPLEKAAIILKDIGGEYAGFFERKITVNRDIFFGTRLSLSIALRERGVDINDCAAITTFVTDHILDDIITYVYEHIPDHAIEYQNLSVSCCVVKSDWILLQLIPNKTIGYRHGFTCVRFKHARARRASARSYLALNVDAHGRLCVCVIQQCFAAKCGNNKLRTLFTVDIDSKCRLEHQ.

The CHC2-type zinc finger occupies 1012-1052; the sequence is CVRFKHARARRASARSYLALNVDAHGRLCVCVIQQCFAAKC.

The protein belongs to the herpesviridae DNA primase family. As to quaternary structure, associates with the helicase and the primase-associated factor to form the helicase-primase factor.

It localises to the host nucleus. In terms of biological role, essential component of the helicase/primase complex. Unwinds the DNA at the replication forks and generates single-stranded DNA for both leading and lagging strand synthesis. The primase initiates primer synthesis and thereby produces large amount of short RNA primers on the lagging strand that the polymerase elongates using dNTPs. The sequence is that of DNA primase (MDV066) from Gallus gallus (Chicken).